Consider the following 1311-residue polypeptide: Zinc finger protein 423 (1311 aa).

The segment covering 1–11 has biased composition (basic residues); that stretch reads MSRRKQAKPRS. 3 disordered regions span residues 1–21, 34–70, and 95–123; these read MSRR…EASD, GGLE…EDVE, and AHRC…VASP. Positions 41–54 are enriched in basic and acidic residues; the sequence is ECDRKSSRALEDRN. A phosphoserine mark is found at Ser55 and Ser58. The segment at 75–101 adopts a C2H2-type 1; degenerate zinc-finger fold; the sequence is YTCDHCQQDFESLADLTDHRAHRCPGD. Positions 110–123 are enriched in polar residues; sequence WVASSPSSKDVASP. 7 C2H2-type zinc fingers span residues 146–168, 174–196, 202–224, 230–252, 271–294, 303–326, and 331–353; these read YPCQ…EQIH, FKCT…IKLH, YHCH…LKTH, FKCS…MQAH, FMCD…LTLH, LQCI…HQAH, and HKCP…LDSH. The tract at residues 354–426 is disordered; that stretch reads RQPDSSNHSV…PLRGQKKMRD (73 aa). The segment covering 373-382 has biased composition (polar residues); that stretch reads ASMSSATPDS. A compositionally biased stretch (low complexity) spans 390 to 404; that stretch reads SVASMSSATPDSSAS. The C2H2-type 9; degenerate zinc-finger motif lies at 436 to 460; that stretch reads YSCPYCSKRDFTSLAVLEIHLKTIH. 3 consecutive C2H2-type zinc fingers follow at residues 468-491, 507-530, and 544-567; these read HTCQ…RKLH, FHCN…RVSH, and FFCN…QQAH. The segment at 590–615 adopts a C2H2-type 13; atypical zinc-finger fold; that stretch reads YSCPYCTNSPIFGSILKLTKHIKENH. The tract at residues 617-654 is disordered; the sequence is NIPLAHSKKSKAEQSPVSSDVEVSSPKRQRLSGSANSI. The residue at position 631 (Ser631) is a Phosphoserine. A compositionally biased stretch (low complexity) spans 631–642; that stretch reads SPVSSDVEVSSP. 7 consecutive C2H2-type zinc fingers follow at residues 659–681, 689–711, 719–742, 747–770, 777–800, 808–830, and 834–857; these read YPCN…LKLH, QACP…LTVH, YVCE…LDMH, YHCT…AVKH, YRCT…KHSH, HKCI…ITTH, and YNCR…REKH. The C2H2-type 21; degenerate zinc finger occupies 913 to 935; it reads YGCDICGAAYTMEVLLQNHRLRD. C2H2-type zinc fingers lie at residues 957–979, 986–1008, and 1047–1069; these read HKCN…LQTH, YMCP…KVTH, and FRCV…GTFH. Ser1081 bears the Phosphoserine mark. A C2H2-type 25; degenerate zinc finger spans residues 1091–1109; the sequence is YKCALCLKEFRSKQDLVRL. C2H2-type zinc fingers lie at residues 1147 to 1170, 1195 to 1217, 1225 to 1247, 1256 to 1279, and 1286 to 1309; these read LRCP…QVDH, YQCI…VANH, HECK…LIEH, FKCP…FAVH, and YDCS…MSQH. Residues 1163–1174 show a composition bias toward basic and acidic residues; sequence ESHMQVDHRDLT. The interval 1163–1190 is disordered; that stretch reads ESHMQVDHRDLTPETSGPRKGAQTSPVP.

It belongs to the krueppel C2H2-type zinc-finger protein family. As to quaternary structure, homodimer. Interacts with PARP1, SMAD1 and SMAD4. Interacts with EBF1. Interacts with CEP290. As to expression, expressed in brain, eye, olfactory epithelium, spleen and heart. Expressed in the basal layer, consisting of neural precursor cells and immature sensory neurons of the olfactory epithelium, but not in the mature receptor cells.

The protein resides in the nucleus. Functionally, transcription factor that can both act as an activator or a repressor depending on the context. Plays a central role in BMP signaling and olfactory neurogenesis. Associates with SMADs in response to BMP2 leading to activate transcription of BMP target genes. Acts as a transcriptional repressor via its interaction with EBF1, a transcription factor involved in terminal olfactory receptor neurons differentiation; this interaction preventing EBF1 to bind DNA and activate olfactory-specific genes. Involved in olfactory neurogenesis by participating in a developmental switch that regulates the transition from differentiation to maturation in olfactory receptor neurons. Controls proliferation and differentiation of neural precursors in cerebellar vermis formation. This chain is Zinc finger protein 423 (Znf423), found in Rattus norvegicus (Rat).